A 330-amino-acid polypeptide reads, in one-letter code: Ferredoxin--NADP reductase (330 aa).

Residues E35, Q43, Y48, V90, F123, D285, and T326 each coordinate FAD.

This sequence belongs to the ferredoxin--NADP reductase type 2 family. As to quaternary structure, homodimer. FAD is required as a cofactor.

It carries out the reaction 2 reduced [2Fe-2S]-[ferredoxin] + NADP(+) + H(+) = 2 oxidized [2Fe-2S]-[ferredoxin] + NADPH. In Streptococcus equi subsp. zooepidemicus (strain MGCS10565), this protein is Ferredoxin--NADP reductase.